The chain runs to 94 residues: U27-theraphotoxin-Cg1a (94 aa).

An N-terminal signal peptide occupies residues 1 to 22 (MIFLLPPVIFVMLLAESVLILG). Residues 23–58 (DSEDADLMEMVQMSRPFFNPIIPAVEFVDLREERQR) constitute a propeptide that is removed on maturation. Disulfide bonds link cysteine 60-cysteine 78, cysteine 67-cysteine 83, and cysteine 77-cysteine 88.

Belongs to the neurotoxin 14 (magi-1) family. OAIP-1 subfamily. Expressed by the venom gland.

It is found in the secreted. Functionally, probable ion channel inhibitor. The polypeptide is U27-theraphotoxin-Cg1a (Chilobrachys guangxiensis (Chinese earth tiger tarantula)).